The chain runs to 218 residues: MRTRVKICGLTREQDIASAVQAGADAIGFVFYPASKRHVDPARAAQLRREVPAFVDVVALFVNPRPDEVQAVLDHVAPDLLQFHGDETPQDCGRYGRRYLRAFRAGAPGLDSAAGLAAACRQYADAAGWLFDSYSAGYGGSGQGFDHGLLAGVQADPASCAIVLAGGLHPGNVADAVRAVRPWAVDVSSGVEDAPGIKSAGKIRQLMAAIKSVDQVAR.

It belongs to the TrpF family.

It carries out the reaction N-(5-phospho-beta-D-ribosyl)anthranilate = 1-(2-carboxyphenylamino)-1-deoxy-D-ribulose 5-phosphate. Its pathway is amino-acid biosynthesis; L-tryptophan biosynthesis; L-tryptophan from chorismate: step 3/5. This chain is N-(5'-phosphoribosyl)anthranilate isomerase, found in Bordetella pertussis (strain Tohama I / ATCC BAA-589 / NCTC 13251).